The following is a 143-amino-acid chain: Photosystem II extrinsic protein U (143 aa).

Residues 1 to 29 form the signal peptide; sequence MKRLVGVLMILGLMLTSWGLLGSPQTAIA. The propeptide occupies 30–44; the sequence is ASLSPLSFNPSPVLA.

Belongs to the PsbU family. As to quaternary structure, PSII is composed of 1 copy each of membrane proteins PsbA, PsbB, PsbC, PsbD, PsbE, PsbF, PsbH, PsbI, PsbJ, PsbK, PsbL, PsbM, PsbT, PsbX, PsbY, PsbZ, Psb30/Ycf12, peripheral proteins PsbO, CyanoQ (PsbQ), PsbU, PsbV and a large number of cofactors. It forms dimeric complexes.

The protein resides in the cellular thylakoid membrane. Its function is as follows. One of the extrinsic, lumenal subunits of photosystem II (PSII). PSII is a light-driven water plastoquinone oxidoreductase, using light energy to abstract electrons from H(2)O, generating a proton gradient subsequently used for ATP formation. The extrinsic proteins stabilize the structure of photosystem II oxygen-evolving complex (OEC), the ion environment of oxygen evolution and protect the OEC against heat-induced inactivation. The polypeptide is Photosystem II extrinsic protein U (Leptolyngbya laminosa (Phormidium laminosum)).